Here is a 130-residue protein sequence, read N- to C-terminus: Small ribosomal subunit protein uS9 (130 aa).

The protein belongs to the universal ribosomal protein uS9 family.

The polypeptide is Small ribosomal subunit protein uS9 (Shewanella pealeana (strain ATCC 700345 / ANG-SQ1)).